The primary structure comprises 253 residues: Imidazole glycerol phosphate synthase subunit HisF (253 aa).

Active-site residues include aspartate 11 and aspartate 130.

It belongs to the HisA/HisF family. As to quaternary structure, heterodimer of HisH and HisF.

Its subcellular location is the cytoplasm. The catalysed reaction is 5-[(5-phospho-1-deoxy-D-ribulos-1-ylimino)methylamino]-1-(5-phospho-beta-D-ribosyl)imidazole-4-carboxamide + L-glutamine = D-erythro-1-(imidazol-4-yl)glycerol 3-phosphate + 5-amino-1-(5-phospho-beta-D-ribosyl)imidazole-4-carboxamide + L-glutamate + H(+). It participates in amino-acid biosynthesis; L-histidine biosynthesis; L-histidine from 5-phospho-alpha-D-ribose 1-diphosphate: step 5/9. Its function is as follows. IGPS catalyzes the conversion of PRFAR and glutamine to IGP, AICAR and glutamate. The HisF subunit catalyzes the cyclization activity that produces IGP and AICAR from PRFAR using the ammonia provided by the HisH subunit. The chain is Imidazole glycerol phosphate synthase subunit HisF from Clostridium botulinum (strain 657 / Type Ba4).